The chain runs to 542 residues: Chaperonin GroEL (542 aa).

ATP-binding positions include 29–32 (TLGP), 86–90 (DGTTT), G413, 476–478 (NAA), and D492. Positions 522–542 (PDENGPAAVPDMGMGGMGGMM) are disordered.

This sequence belongs to the chaperonin (HSP60) family. As to quaternary structure, forms a cylinder of 14 subunits composed of two heptameric rings stacked back-to-back. Interacts with the co-chaperonin GroES.

The protein resides in the cytoplasm. It carries out the reaction ATP + H2O + a folded polypeptide = ADP + phosphate + an unfolded polypeptide.. Together with its co-chaperonin GroES, plays an essential role in assisting protein folding. The GroEL-GroES system forms a nano-cage that allows encapsulation of the non-native substrate proteins and provides a physical environment optimized to promote and accelerate protein folding. In Listeria monocytogenes serotype 4a (strain HCC23), this protein is Chaperonin GroEL.